Reading from the N-terminus, the 202-residue chain is MNVLRKIVKKCRDEDTQKPSPVSAPPYDDDLWLPPPEYVPLKELTSKKNMRNFCVNGEVKACSPNGYSFRILRHILGSFNEIYSGNHRMIGLVKVVVGLALSGAPVPEGMNWVYKLRRTLIFQWADSRGPLEGEELEYSQEITWDDDTEFVGLQIRVGARQCHIQGRIWCINSNSRACQLWSDMSLQTQRSEEDKDSSLLLE.

The short motif at 35-38 (PPEY) is the PPXY motif element. Residues 115-151 (KLRRTLIFQWADSRGPLEGEELEYSQEITWDDDTEFV) are essential for glycoprotein binding.

The protein belongs to the lyssavirus matrix protein family. Homomultimer. Interacts with nucleoprotein and with the cytoplasmic domain of glycoprotein. Interacts with host ATP6V1A; this interaction plays an important role in virion uncoating after viral entry.

It localises to the virion membrane. The protein localises to the host endomembrane system. It is found in the host cytoplasm. Functionally, plays a major role in assembly, budding and uncoating of virion after membrane fusion. Completely covers the ribonucleoprotein coil and keep it in condensed bullet-shaped form. Inhibits viral transcription and stimulates replication. Plays a major role in early induction of TRAIL-mediated apoptosis in infected neurons. Inhibits the integrated stress response (ISR) in the infected cell by blocking the formation of stress granules. In Rabies virus (strain CVS-11) (RABV), this protein is Matrix protein (M).